The chain runs to 422 residues: Histidinol dehydrogenase (422 aa).

Residues Tyr123, Gln183, and Asn206 each contribute to the NAD(+) site. Residues Ser229, Gln251, and His254 each coordinate substrate. Zn(2+) contacts are provided by Gln251 and His254. Residues Glu320 and His321 each act as proton acceptor in the active site. His321, Asp354, Glu408, and His413 together coordinate substrate. Position 354 (Asp354) interacts with Zn(2+). His413 contacts Zn(2+).

Belongs to the histidinol dehydrogenase family. The cofactor is Zn(2+).

The enzyme catalyses L-histidinol + 2 NAD(+) + H2O = L-histidine + 2 NADH + 3 H(+). It participates in amino-acid biosynthesis; L-histidine biosynthesis; L-histidine from 5-phospho-alpha-D-ribose 1-diphosphate: step 9/9. Functionally, catalyzes the sequential NAD-dependent oxidations of L-histidinol to L-histidinaldehyde and then to L-histidine. This Haloarcula marismortui (strain ATCC 43049 / DSM 3752 / JCM 8966 / VKM B-1809) (Halobacterium marismortui) protein is Histidinol dehydrogenase.